Here is a 475-residue protein sequence, read N- to C-terminus: Aspartyl/glutamyl-tRNA(Asn/Gln) amidotransferase subunit B (475 aa).

Belongs to the GatB/GatE family. GatB subfamily. In terms of assembly, heterotrimer of A, B and C subunits.

It carries out the reaction L-glutamyl-tRNA(Gln) + L-glutamine + ATP + H2O = L-glutaminyl-tRNA(Gln) + L-glutamate + ADP + phosphate + H(+). The catalysed reaction is L-aspartyl-tRNA(Asn) + L-glutamine + ATP + H2O = L-asparaginyl-tRNA(Asn) + L-glutamate + ADP + phosphate + 2 H(+). Allows the formation of correctly charged Asn-tRNA(Asn) or Gln-tRNA(Gln) through the transamidation of misacylated Asp-tRNA(Asn) or Glu-tRNA(Gln) in organisms which lack either or both of asparaginyl-tRNA or glutaminyl-tRNA synthetases. The reaction takes place in the presence of glutamine and ATP through an activated phospho-Asp-tRNA(Asn) or phospho-Glu-tRNA(Gln). The chain is Aspartyl/glutamyl-tRNA(Asn/Gln) amidotransferase subunit B from Hydrogenovibrio crunogenus (strain DSM 25203 / XCL-2) (Thiomicrospira crunogena).